The chain runs to 1847 residues: Replication factor C small subunit (1847 aa).

DOD-type homing endonuclease domains lie at 179 to 311 (WLGY…RFGI), 780 to 927 (MLGL…ISGI), and 1348 to 1508 (LLGF…EFEV).

It belongs to the activator 1 small subunits family. RfcS subfamily. As to quaternary structure, heteromultimer composed of small subunits (RfcS) and large subunits (RfcL). This protein undergoes a protein self splicing that involves a post-translational excision of the intervening region (intein) followed by peptide ligation.

Part of the RFC clamp loader complex which loads the PCNA sliding clamp onto DNA. This is Replication factor C small subunit (rfcS) from Methanocaldococcus jannaschii (strain ATCC 43067 / DSM 2661 / JAL-1 / JCM 10045 / NBRC 100440) (Methanococcus jannaschii).